A 505-amino-acid chain; its full sequence is Catalase (505 aa).

Residues 1 to 25 form a disordered region; sequence MSQQDKKLTGVFGHPVSDRENSMTA. Active-site residues include His56 and Asn129. Residue Tyr339 coordinates heme.

This sequence belongs to the catalase family. As to quaternary structure, homodimer. Heme serves as cofactor.

It carries out the reaction 2 H2O2 = O2 + 2 H2O. Its function is as follows. Decomposes hydrogen peroxide into water and oxygen; serves to protect cells from the toxic effects of hydrogen peroxide. The chain is Catalase (katA) from Staphylococcus aureus (strain MSSA476).